Here is a 315-residue protein sequence, read N- to C-terminus: Glutamyl-Q tRNA(Asp) synthetase (315 aa).

Residues 23-27 and glutamate 59 each bind L-glutamate; that span reads RFAPS. Residues 26–36 carry the 'HIGH' region motif; that stretch reads PSPTGPLHIGS. Zn(2+)-binding residues include cysteine 115, cysteine 117, tyrosine 142, and cysteine 146. 2 residues coordinate L-glutamate: tyrosine 202 and arginine 220. A 'KMSKS' region motif is present at residues 258–262; the sequence is KLSKQ. Lysine 261 contributes to the ATP binding site.

This sequence belongs to the class-I aminoacyl-tRNA synthetase family. GluQ subfamily. It depends on Zn(2+) as a cofactor.

Functionally, catalyzes the tRNA-independent activation of glutamate in presence of ATP and the subsequent transfer of glutamate onto a tRNA(Asp). Glutamate is transferred on the 2-amino-5-(4,5-dihydroxy-2-cyclopenten-1-yl) moiety of the queuosine in the wobble position of the QUC anticodon. The protein is Glutamyl-Q tRNA(Asp) synthetase of Ralstonia nicotianae (strain ATCC BAA-1114 / GMI1000) (Ralstonia solanacearum).